The primary structure comprises 158 residues: Disulfide bond formation protein B (158 aa).

Residues 1–7 lie on the Cytoplasmic side of the membrane; it reads MKNSRPV. The chain crosses the membrane as a helical span at residues 8–24; it reads LFAVALASLLLLAVALY. Over 25–42 the chain is Periplasmic; it reads LQHVENMLPCPLCVIQRY. Cys34 and Cys37 are joined by a disulfide. The helical transmembrane segment at 43–57 threads the bilayer; that stretch reads AFAAIALICLVTAFR. At 58–63 the chain is on the cytoplasmic side; that stretch reads TEVTAR. A helical transmembrane segment spans residues 64–81; it reads IGAALAALASLAGAGVAG. The Periplasmic portion of the chain corresponds to 82-136; it reads WHIYIKAHPTVSCGIDPLETSLNTIPTAKLLPFLLQADGLCTTEYAPIMGLSIPQ. An intrachain disulfide couples Cys94 to Cys122. A helical membrane pass occupies residues 137-155; the sequence is WALVWFIVIALFLLHTAFR. At 156 to 158 the chain is on the cytoplasmic side; sequence KKS.

This sequence belongs to the DsbB family.

The protein localises to the cell inner membrane. Required for disulfide bond formation in some periplasmic proteins. Acts by oxidizing the DsbA protein. The sequence is that of Disulfide bond formation protein B from Herminiimonas arsenicoxydans.